The primary structure comprises 486 residues: Glutamyl-tRNA(Gln) amidotransferase subunit A (486 aa).

Residues Lys76 and Ser151 each act as charge relay system in the active site. The active-site Acyl-ester intermediate is Ser175.

Belongs to the amidase family. GatA subfamily. In terms of assembly, heterotrimer of A, B and C subunits.

The catalysed reaction is L-glutamyl-tRNA(Gln) + L-glutamine + ATP + H2O = L-glutaminyl-tRNA(Gln) + L-glutamate + ADP + phosphate + H(+). Its function is as follows. Allows the formation of correctly charged Gln-tRNA(Gln) through the transamidation of misacylated Glu-tRNA(Gln) in organisms which lack glutaminyl-tRNA synthetase. The reaction takes place in the presence of glutamine and ATP through an activated gamma-phospho-Glu-tRNA(Gln). The polypeptide is Glutamyl-tRNA(Gln) amidotransferase subunit A (Nitrosomonas eutropha (strain DSM 101675 / C91 / Nm57)).